Reading from the N-terminus, the 410-residue chain is Acetate kinase (410 aa).

Asparagine 7 lines the Mg(2+) pocket. Lysine 14 is an ATP binding site. Arginine 98 contributes to the substrate binding site. Residue aspartate 155 is the Proton donor/acceptor of the active site. Residues 215–219 (HLGNG), 290–292 (DMR), and 338–342 (GIGEN) each bind ATP. Mg(2+) is bound at residue glutamate 392.

The protein belongs to the acetokinase family. In terms of assembly, homodimer. Requires Mg(2+) as cofactor. It depends on Mn(2+) as a cofactor.

Its subcellular location is the cytoplasm. It catalyses the reaction acetate + ATP = acetyl phosphate + ADP. It participates in metabolic intermediate biosynthesis; acetyl-CoA biosynthesis; acetyl-CoA from acetate: step 1/2. Functionally, catalyzes the formation of acetyl phosphate from acetate and ATP. Can also catalyze the reverse reaction. The polypeptide is Acetate kinase (Kocuria rhizophila (strain ATCC 9341 / DSM 348 / NBRC 103217 / DC2201)).